A 527-amino-acid polypeptide reads, in one-letter code: MRSDKSALVFLLLQLFCVGCGFCGKVLVWPCDMSHWLNVKVILEELIVRGHEVTVLTHSKPSLIDYRKPSALKFEVVHMPQDRTEENEIFVDLALNVLPGLSTWQSVIKLNDFFVEIRGTLKMMCESFIYNQTLMKKLQETNYDVMLIDPVIPCGDLMAELLAVPFVLTLRISVGGNMERSCGKLPAPLSYVPVPMTGLTDRMTFLERVKNSMLSVLFHFWIQDYDYHFWEEFYSKALGRPTTLCETVGKAEIWLIRTYWDFEFPQPYQPNFEFVGGLHCKPAKALPKEMENFVQSSGEDGIVVFSLGSLFQNVTEEKANIIASALAQIPQKVLWRYKGKKPSTLGANTRLYDWIPQNDLLGHPKTKAFITHGGMNGIYEAIYHGVPMVGVPIFGDQLDNIAHMKAKGAAVEINFKTMTSEDLLRALRTVITDSSYKENAMRLSRIHHDQPVKPLDRAVFWIEFVMRHKGAKHLRSAAHDLTWFQHYSIDVIGFLLACVATAIFLFTKCFLFSCQKFNKTRKIEKRE.

The first 23 residues, 1-23, serve as a signal peptide directing secretion; that stretch reads MRSDKSALVFLLLQLFCVGCGFC. The Extracellular portion of the chain corresponds to 24-491; sequence GKVLVWPCDM…TWFQHYSIDV (468 aa). N-linked (GlcNAc...) asparagine glycosylation occurs at N313. A helical membrane pass occupies residues 492 to 512; it reads IGFLLACVATAIFLFTKCFLF. Over 513 to 527 the chain is Cytoplasmic; the sequence is SCQKFNKTRKIEKRE.

Belongs to the UDP-glycosyltransferase family.

It localises to the membrane. It catalyses the reaction glucuronate acceptor + UDP-alpha-D-glucuronate = acceptor beta-D-glucuronoside + UDP + H(+). Functionally, UDP-glucuronosyltransferases catalyze phase II biotransformation reactions in which lipophilic substrates are conjugated with glucuronic acid to increase water solubility and enhance excretion. They are of major importance in the conjugation and subsequent elimination of potentially toxic xenobiotics and endogenous compounds. The protein is UDP-glucuronosyltransferase 2A3 (UGT2A3) of Homo sapiens (Human).